A 408-amino-acid polypeptide reads, in one-letter code: Phosphoglycerate kinase (408 aa).

Residues 22 to 24 (DIN), Arg39, 60 to 63 (HQSR), Arg117, and Arg157 each bind substrate. ATP contacts are provided by residues Glu332 and 358–361 (GGHT).

Belongs to the phosphoglycerate kinase family. As to quaternary structure, monomer.

It is found in the cytoplasm. The catalysed reaction is (2R)-3-phosphoglycerate + ATP = (2R)-3-phospho-glyceroyl phosphate + ADP. It participates in carbohydrate degradation; glycolysis; pyruvate from D-glyceraldehyde 3-phosphate: step 2/5. The sequence is that of Phosphoglycerate kinase from Thermoplasma volcanium (strain ATCC 51530 / DSM 4299 / JCM 9571 / NBRC 15438 / GSS1).